Reading from the N-terminus, the 414-residue chain is 3-oxoacyl-[acyl-carrier-protein] synthase 2 (414 aa).

Residues 3-411 (KRRVVITGLG…GTNGTLVLSR (409 aa)) form the Ketosynthase family 3 (KS3) domain. Active-site for beta-ketoacyl synthase activity residues include Cys164, His304, and His341.

The protein belongs to the thiolase-like superfamily. Beta-ketoacyl-ACP synthases family. In terms of assembly, homodimer.

The catalysed reaction is a fatty acyl-[ACP] + malonyl-[ACP] + H(+) = a 3-oxoacyl-[ACP] + holo-[ACP] + CO2. The enzyme catalyses (9Z)-hexadecenoyl-[ACP] + malonyl-[ACP] + H(+) = 3-oxo-(11Z)-octadecenoyl-[ACP] + holo-[ACP] + CO2. The protein operates within lipid metabolism; fatty acid biosynthesis. Involved in the type II fatty acid elongation cycle. Catalyzes the elongation of a wide range of acyl-ACP by the addition of two carbons from malonyl-ACP to an acyl acceptor. Can efficiently catalyze the conversion of palmitoleoyl-ACP (cis-hexadec-9-enoyl-ACP) to cis-vaccenoyl-ACP (cis-octadec-11-enoyl-ACP), an essential step in the thermal regulation of fatty acid composition. The sequence is that of 3-oxoacyl-[acyl-carrier-protein] synthase 2 (fabF) from Coxiella burnetii (strain RSA 493 / Nine Mile phase I).